Consider the following 337-residue polypeptide: Heme A synthase (337 aa).

The next 5 helical transmembrane spans lie at 6–26, 87–107, 119–139, 154–174, and 192–212; these read ITKW…IGGI, FIHR…LIYF, LPYI…WYMV, LAFH…QLIK, and LIFS…GALV. Histidine 256 contributes to the heme binding site. 3 helical membrane passes run 258–278, 285–305, and 308–328; these read LVGY…LKIE, IAYF…LTLL, and VPII…SIII. A heme-binding site is contributed by histidine 316.

Belongs to the COX15/CtaA family. Type 2 subfamily. Interacts with CtaB. The cofactor is heme b.

It is found in the cell membrane. The enzyme catalyses Fe(II)-heme o + 2 A + H2O = Fe(II)-heme a + 2 AH2. It participates in porphyrin-containing compound metabolism; heme A biosynthesis; heme A from heme O: step 1/1. Functionally, catalyzes the conversion of heme O to heme A by two successive hydroxylations of the methyl group at C8. The first hydroxylation forms heme I, the second hydroxylation results in an unstable dihydroxymethyl group, which spontaneously dehydrates, resulting in the formyl group of heme A. In Rickettsia conorii (strain ATCC VR-613 / Malish 7), this protein is Heme A synthase.